The primary structure comprises 505 residues: GDP-Man:Man(3)GlcNAc(2)-PP-Dol alpha-1,2-mannosyltransferase (505 aa).

Residues 1–4 (MSTM) lie on the Lumenal side of the membrane. The chain crosses the membrane as a helical span at residues 5–25 (LWVVVAAVLLFVLPVVRVPML). Over 26-130 (DLTRRNIIRW…KWVDGSTWKH (105 aa)) the chain is Cytoplasmic. The helical intramembrane region spans 131-151 (LTLVGQAMGSMLLTIEALLRF). At 152 to 374 (VPDIWLDTMG…FGINAMWNEH (223 aa)) the chain is on the cytoplasmic side. An intramembrane region (helical) is located at residues 375 to 395 (FGIAVVEYAAAGLISLVHASA). At 396 to 505 (GPLLDIIVPW…EHKTSRLGSN (110 aa)) the chain is on the cytoplasmic side.

Belongs to the glycosyltransferase group 1 family.

The protein localises to the endoplasmic reticulum membrane. It catalyses the reaction an alpha-D-Man-(1-&gt;3)-[alpha-D-Man-(1-&gt;6)]-beta-D-Man-(1-&gt;4)-beta-D-GlcNAc-(1-&gt;4)-alpha-D-GlcNAc-diphospho-di-trans,poly-cis-dolichol + 2 GDP-alpha-D-mannose = an alpha-D-Man-(1-&gt;2)-alpha-D-Man-(1-&gt;2)-alpha-D-Man-(1-&gt;3)-[alpha-D-Man-(1-&gt;6)]-beta-D-Man-(1-&gt;4)-beta-D-GlcNAc-(1-&gt;4)-alpha-D-GlcNAc-diphospho-di-trans,poly-cis-dolichol + 2 GDP + 2 H(+). Its pathway is protein modification; protein glycosylation. Functionally, GDP-Man:Man(3)GlcNAc(2)-PP-Dol alpha-1,2-mannosyltransferase that operates in the biosynthetic pathway of dolichol-linked oligosaccharides, the glycan precursors employed in protein asparagine (N)-glycosylation. The assembly of dolichol-linked oligosaccharides begins on the cytosolic side of the endoplasmic reticulum membrane and finishes in its lumen. The sequential addition of sugars to dolichol pyrophosphate produces dolichol-linked oligosaccharides containing fourteen sugars, including two GlcNAcs, nine mannoses and three glucoses. Once assembled, the oligosaccharide is transferred from the lipid to nascent proteins by oligosaccharyltransferases. Catalyzes, on the cytoplasmic face of the endoplasmic reticulum, the addition of the fourth and fifth mannose residues to the dolichol-linked oligosaccharide chain, to produce Man(5)GlcNAc(2)-PP-dolichol core oligosaccharide. In Candida glabrata (strain ATCC 2001 / BCRC 20586 / JCM 3761 / NBRC 0622 / NRRL Y-65 / CBS 138) (Yeast), this protein is GDP-Man:Man(3)GlcNAc(2)-PP-Dol alpha-1,2-mannosyltransferase (ALG11).